The chain runs to 1131 residues: Tyrosine-protein kinase JAK2 (1131 aa).

Residues 1–239 (MGMACLTMTE…RYRFRRFIEQ (239 aa)) are interaction with cytokine/interferon/growth hormone receptors. The region spanning 37–380 (PVLQVYLYHS…GYYRLTADAH (344 aa)) is the FERM domain. Tyr-119 bears the Phosphotyrosine; by autocatalysis mark. A phosphotyrosine mark is found at Tyr-372 and Tyr-373. Positions 401–482 (HGPISMDFAI…NLKDLLNCYQ (82 aa)) constitute an SH2; atypical domain. Ser-523 is subject to Phosphoserine. Positions 545–809 (LIFNESLGQG…AIIRDLNSLF (265 aa)) constitute a Protein kinase 1 domain. 2 positions are modified to phosphotyrosine: Tyr-570 and Tyr-813. One can recognise a Protein kinase 2 domain in the interval 849–1126 (LKFLQQLGKG…RDLALRVDQI (278 aa)). 855-863 (LGKGNFGSV) is a binding site for ATP. Residue Tyr-868 is modified to Phosphotyrosine; by autocatalysis. Residue Lys-882 participates in ATP binding. Phosphotyrosine; by autocatalysis is present on residues Tyr-966 and Tyr-972. Asp-976 serves as the catalytic Proton acceptor. A phosphotyrosine; by autocatalysis mark is found at Tyr-1007 and Tyr-1008.

This sequence belongs to the protein kinase superfamily. Tyr protein kinase family. JAK subfamily. As to quaternary structure, interacts with IL23R, SKB1 and STAM2. Interacts with EPOR. Interacts with LYN. Interacts with SIRPA. Interacts with SH2B1. Interacts with TEC. Interacts with IFNGR2 (via intracellular domain). Interacts with LEPR (Isoform B). Interacts with HSP90AB1; promotes functional activation in a heat shock-dependent manner. Interacts with STRA6. Interacts with ASB2; the interaction targets JAK2 for Notch-induced proteasomal degradation. Mg(2+) serves as cofactor. In terms of processing, autophosphorylated, leading to regulate its activity. Leptin promotes phosphorylation on tyrosine residues, including phosphorylation on Tyr-813. Autophosphorylation on Tyr-119 in response to EPO down-regulates its kinase activity. Autophosphorylation on Tyr-868, Tyr-966 and Tyr-972 in response to growth hormone (GH) are required for maximal kinase activity. Also phosphorylated by TEC. Phosphorylated on tyrosine residues in response to interferon gamma signaling. Phosphorylated on tyrosine residues in response to a signaling cascade that is activated by increased cellular retinol. Post-translationally, undergoes Notch-induced ubiquitination and subsequent proteasomal degradation which is mediated by ASB1 or ASB2, the substrate-recognition components of probable ECS E3 ubiquitin-protein ligase complexes.

It localises to the endomembrane system. The protein localises to the cytoplasm. The protein resides in the nucleus. It carries out the reaction L-tyrosyl-[protein] + ATP = O-phospho-L-tyrosyl-[protein] + ADP + H(+). With respect to regulation, regulated by autophosphorylation, can both activate or decrease activity. Heme regulates its activity by enhancing the phosphorylation on Tyr-1007 and Tyr-1008. Non-receptor tyrosine kinase involved in various processes such as cell growth, development, differentiation or histone modifications. Mediates essential signaling events in both innate and adaptive immunity. In the cytoplasm, plays a pivotal role in signal transduction via its association with type I receptors such as growth hormone (GHR), prolactin (PRLR), leptin (LEPR), erythropoietin (EPOR), thrombopoietin (THPO); or type II receptors including IFN-alpha, IFN-beta, IFN-gamma and multiple interleukins. Following ligand-binding to cell surface receptors, phosphorylates specific tyrosine residues on the cytoplasmic tails of the receptor, creating docking sites for STATs proteins. Subsequently, phosphorylates the STATs proteins once they are recruited to the receptor. Phosphorylated STATs then form homodimer or heterodimers and translocate to the nucleus to activate gene transcription. For example, cell stimulation with erythropoietin (EPO) during erythropoiesis leads to JAK2 autophosphorylation, activation, and its association with erythropoietin receptor (EPOR) that becomes phosphorylated in its cytoplasmic domain. Then, STAT5 (STAT5A or STAT5B) is recruited, phosphorylated and activated by JAK2. Once activated, dimerized STAT5 translocates into the nucleus and promotes the transcription of several essential genes involved in the modulation of erythropoiesis. Part of a signaling cascade that is activated by increased cellular retinol and that leads to the activation of STAT5 (STAT5A or STAT5B). In addition, JAK2 mediates angiotensin-2-induced ARHGEF1 phosphorylation. Plays a role in cell cycle by phosphorylating CDKN1B. Cooperates with TEC through reciprocal phosphorylation to mediate cytokine-driven activation of FOS transcription. In the nucleus, plays a key role in chromatin by specifically mediating phosphorylation of 'Tyr-41' of histone H3 (H3Y41ph), a specific tag that promotes exclusion of CBX5 (HP1 alpha) from chromatin. Up-regulates the potassium voltage-gated channel activity of KCNA3. This chain is Tyrosine-protein kinase JAK2, found in Sus scrofa (Pig).